Here is an 898-residue protein sequence, read N- to C-terminus: Interleukin enhancer-binding factor 3 (898 aa).

A DZF domain is found at 5-378 (RIFVNDDRHV…PMKRPMEEDG (374 aa)). Residues 52–85 (QEKGNSELSEAENMDTPPDDESKEGAGEQKAEHM) are disordered. The segment covering 60-73 (SEAENMDTPPDDES) has biased composition (acidic residues). Thr67 is modified (phosphothreonine). The segment covering 74 to 85 (KEGAGEQKAEHM) has biased composition (basic and acidic residues). Lys100 bears the N6-acetyllysine mark. Thr188 is subject to Phosphothreonine; by PKR. Ser190 bears the Phosphoserine mark. Lys297 is covalently cross-linked (Glycyl lysine isopeptide (Lys-Gly) (interchain with G-Cter in ubiquitin)). Residue Thr315 is modified to Phosphothreonine; by PKR. Lys348 is covalently cross-linked (Glycyl lysine isopeptide (Lys-Gly) (interchain with G-Cter in SUMO1)). The tract at residues 363 to 402 (TTYAITPMKRPMEEDGEEKSPSKKKKKIQKKEEKADPPQA) is disordered. Residues 371–389 (KRPMEEDGEEKSPSKKKKK) carry the Bipartite nuclear localization signal motif. The segment covering 372 to 383 (RPMEEDGEEKSP) has biased composition (basic and acidic residues). Phosphoserine occurs at positions 382 and 384. Residue Lys396 forms a Glycyl lysine isopeptide (Lys-Gly) (interchain with G-Cter in SUMO2) linkage. The DRBM 1 domain maps to 398 to 467 (DPPQAMNALM…AVKVLQDMGL (70 aa)). At Lys460 the chain carries N6-acetyllysine. 2 disordered regions span residues 466–495 (GLPT…IVAP) and 505–524 (PSSV…LTKH). The segment covering 472–481 (EGRDSSKGED) has biased composition (basic and acidic residues). Phosphoserine occurs at positions 476, 477, 482, and 486. Lys489 is covalently cross-linked (Glycyl lysine isopeptide (Lys-Gly) (interchain with G-Cter in SUMO2)). The 67-residue stretch at 524 to 590 (HGKNPVMELN…ALAALEKLFP (67 aa)) folds into the DRBM 2 domain. Residue Thr592 is modified to Phosphothreonine. Residues 609 to 898 (RGGPKFAAKP…TEHSMNYQYR (290 aa)) form an interaction with PRMT1 region. 2 disordered regions span residues 631–661 (NEVP…GGAN) and 719–898 (QGDS…YQYR). Residues 644–661 (RGGNIRGRGRGRGFGGAN) are compositionally biased toward gly residues. Low complexity-rich tracts occupy residues 745-769 (SYSS…SSYG), 783-794 (GSYSSYSNSYNS), and 802-812 (DYSYDSKFNYS). Phosphoserine is present on residues Ser794, Ser812, Ser814, and Ser818. Over residues 813–822 (GSGGRSGGNS) the composition is skewed to gly residues. The span at 823–834 (YGSSGSSSYNTG) shows a compositional bias: low complexity. Positions 835–845 (SHGGYGTGSGG) are enriched in gly residues. A compositionally biased stretch (low complexity) spans 846–886 (SSSYQGKQGGYSSQSNYSSPGSSQSYSGPASSYQSSQGGYS).

In terms of assembly, identified in a IGF2BP1-dependent mRNP granule complex containing untranslated mRNAs. Interacts with FUS and SMN. Interacts (via C-terminus) with PRMT1. Forms a complex with ILF2. Can also bind to PRKDC/XRCC7: this may stabilize the interaction of PRKDC/XRCC7 and the heterodimeric complex of XRCC6/KU70 and XRCC5/KU80. Forms a heteromeric complex with ZNF346 and ILF3. Found in a nuclear export complex with XPO5, ILF3, Ran and double-stranded RNA or double-stranded minihelix VA1 RNA. Found in a nuclear export complex with XPO5, RAN, ILF3, ZNF346 and double-stranded RNA. Interacts with XPO5 and ZNF346. Forms a complex with ILF2, YLPM1, KHDRBS1, RBMX, NCOA5 and PPP1CA. Interacts with AGO1 and AGO2. Interacts with DHX36; this interaction occurs in a RNA-dependent manner. Interacts with ELAVL1; this interaction occurs in a RNA-dependent manner. Interacts with HAVCR2; this interaction promotes ILF3 ubiquitination and subsequent degradation. In terms of processing, phosphorylated at Thr-188 and Thr-315 by PKR in response to RNA viruses. This phosphorylation results in the dissociation of ILF2 from the ILF2-ILF3 complex resulting in a cytoplasmic sequestration of ILF3 where it can bind to viral RNAs and impede viral replication. Post-translationally, methylated by protein arginine N-methyltransferase 1. In terms of tissue distribution, ubiquitous. Expressed at high levels in the thymus, testis, ovary and at lower levelss in the spleen.

Its subcellular location is the nucleus. It localises to the nucleolus. The protein localises to the cytoplasm. In terms of biological role, RNA-binding protein that plays an essential role in the biogenesis of circular RNAs (circRNAs) which are produced by back-splicing circularization of pre-mRNAs. Within the nucleus, promotes circRNAs processing by stabilizing the regulatory elements residing in the flanking introns of the circularized exons. Plays thereby a role in the back-splicing of a subset of circRNAs. As a consequence, participates in a wide range of transcriptional and post-transcriptional processes. Binds to poly-U elements and AU-rich elements (AREs) in the 3'-UTR of target mRNAs. Upon viral infection, ILF3 accumulates in the cytoplasm and participates in the innate antiviral response. Mechanistically, ILF3 becomes phosphorylated and activated by the double-stranded RNA-activated protein kinase/PKR which releases ILF3 from cellular mature circRNAs. In turn, unbound ILF3 molecules are able to interact with and thus inhibit viral mRNAs. This is Interleukin enhancer-binding factor 3 (Ilf3) from Mus musculus (Mouse).